Reading from the N-terminus, the 311-residue chain is Methionyl-tRNA formyltransferase (311 aa).

Residue 112–115 (SLLP) participates in (6S)-5,6,7,8-tetrahydrofolate binding.

This sequence belongs to the Fmt family.

The catalysed reaction is L-methionyl-tRNA(fMet) + (6R)-10-formyltetrahydrofolate = N-formyl-L-methionyl-tRNA(fMet) + (6S)-5,6,7,8-tetrahydrofolate + H(+). In terms of biological role, attaches a formyl group to the free amino group of methionyl-tRNA(fMet). The formyl group appears to play a dual role in the initiator identity of N-formylmethionyl-tRNA by promoting its recognition by IF2 and preventing the misappropriation of this tRNA by the elongation apparatus. The polypeptide is Methionyl-tRNA formyltransferase (Bradyrhizobium sp. (strain BTAi1 / ATCC BAA-1182)).